A 364-amino-acid chain; its full sequence is D-alanine--D-alanine ligase A (364 aa).

An ATP-grasp domain is found at 145–348 (KRLLRDAGLN…YTDLITRLIE (204 aa)). Residue 175–230 (ESKLGLPLFVKPANQGSSVGVSKVTSEEQYAIAVDLAFEFDHKVIVEQGIKGREIE) participates in ATP binding. Mg(2+) is bound by residues D302, E315, and N317.

This sequence belongs to the D-alanine--D-alanine ligase family. Mg(2+) serves as cofactor. The cofactor is Mn(2+).

It is found in the cytoplasm. The enzyme catalyses 2 D-alanine + ATP = D-alanyl-D-alanine + ADP + phosphate + H(+). The protein operates within cell wall biogenesis; peptidoglycan biosynthesis. Functionally, cell wall formation. The sequence is that of D-alanine--D-alanine ligase A (ddlA) from Escherichia coli O157:H7.